The primary structure comprises 252 residues: Flagellar L-ring protein (252 aa).

The N-terminal stretch at 1–25 (MSKSVPLQRIVLVAALMATGGLAGG) is a signal peptide. Residue C26 is the site of N-palmitoyl cysteine attachment. A lipid anchor (S-diacylglycerol cysteine) is attached at C26.

It belongs to the FlgH family. As to quaternary structure, the basal body constitutes a major portion of the flagellar organelle and consists of four rings (L,P,S, and M) mounted on a central rod.

The protein resides in the cell outer membrane. Its subcellular location is the bacterial flagellum basal body. In terms of biological role, assembles around the rod to form the L-ring and probably protects the motor/basal body from shearing forces during rotation. In Rhodopseudomonas palustris (strain ATCC BAA-98 / CGA009), this protein is Flagellar L-ring protein.